The sequence spans 694 residues: MQTSPDMFINRELSWLRFNSRVLDQCSKNLPLLEKLKFIAIYCTNLDEFYMIRVAGLKQLFSAGVNASSSDEMTPLQQLKAIRKYLHQEKELLERYFNEITSELEKENLFIKHYENLDENLKQKCDEYFFSNIFPVIVPIAVDATHPFPHLNNLSFSLAVKICDKAHPELVKFGMIRIPRVLPRFYEVSANIYVPIESIVHQHAEEIFPGYKLLASAAFRVTRNADMVIEEEEADDFMMILEQGLKLRRKGAFVRLQIQKDADEQIVEFLNTHMKIFHKDVYEYSILLNLPSLWQIAGNKTFTHLLSPLYTPKTLPPFDENLSIFDAVEKEDILIIQPFESFDPVYKFIKEASKDPEVISIRMTLYRVEKNSNIVQALIDAASDGKQVTVMVELKARFDEENNLHWAKALENAGAHVIYGITGFKVHAKVSQVIRKQGDKLKFYMHLSTGNYNASSAKIYTDVSYFTSKAEFARDTTSFFHILSGFSKNRRLQTLSMSPNQIKEKVLEMIRIETSKKNEGVIVAKMNSLVDSDIIQALYEASMEGVQIDLIIRGICCLKPDEEYSKNIRVRSIIGKYLEHARVFYFKHSEPNYFISSADWMPRNLERRLELMTPIYDERSKAKLAQFLRLQLSDNVLAYELKNNGEYEKIPSSEKIIDSQQTLEEYVSKIYKTLKKDTDQSRATHLASKLFKEN.

Asn-45 contributes to the ATP binding site. The Mg(2+) site is built by Arg-367 and Arg-397. His-427 acts as the Phosphohistidine intermediate in catalysis. ATP contacts are provided by Tyr-460, Arg-553, and His-580.

Belongs to the polyphosphate kinase 1 (PPK1) family. It depends on Mg(2+) as a cofactor. Post-translationally, an intermediate of this reaction is the autophosphorylated ppk in which a phosphate is covalently linked to a histidine residue through a N-P bond.

The enzyme catalyses [phosphate](n) + ATP = [phosphate](n+1) + ADP. In terms of biological role, catalyzes the reversible transfer of the terminal phosphate of ATP to form a long-chain polyphosphate (polyP). The protein is Polyphosphate kinase of Campylobacter jejuni subsp. jejuni serotype O:6 (strain 81116 / NCTC 11828).